The following is a 203-amino-acid chain: MQLDLYVDKINNGFNSNILDILAFISIILGIYTIVSKNPVVSVLFLIGLFSTISIYLIMIGLTFIGLSYLLVYIGAVSILFLFILMLINIRISELVSTNNNYIPLAILSMITLVYILGQKIITNVVQFNILNSFTSSLFEKSFKESINYSNSLSWDTNLIDITHTSAIGNIMYSSYSFWLIIISLILLLAMVGSIVISIGRVI.

The next 5 helical transmembrane spans lie at 16–36 (SNILDILAFISIILGIYTIVS), 40–60 (VVSVLFLIGLFSTISIYLIMI), 70–90 (LLVYIGAVSILFLFILMLINI), 102–122 (YIPLAILSMITLVYILGQKII), and 179–199 (WLIIISLILLLAMVGSIVISI).

The protein belongs to the complex I subunit 6 family.

Its subcellular location is the mitochondrion membrane. It catalyses the reaction a ubiquinone + NADH + 5 H(+)(in) = a ubiquinol + NAD(+) + 4 H(+)(out). Core subunit of the mitochondrial membrane respiratory chain NADH dehydrogenase (Complex I) that is believed to belong to the minimal assembly required for catalysis. Complex I functions in the transfer of electrons from NADH to the respiratory chain. The immediate electron acceptor for the enzyme is believed to be ubiquinone. The protein is NADH-ubiquinone oxidoreductase chain 6 (ND6) of Trichophyton rubrum (Athlete's foot fungus).